Consider the following 359-residue polypeptide: CDP-glucose 4,6-dehydratase (359 aa).

It belongs to the NAD(P)-dependent epimerase/dehydratase family. NAD(+) is required as a cofactor.

It carries out the reaction CDP-D-glucose = CDP-4-dehydro-6-deoxy-D-glucose + H2O. It functions in the pathway nucleotide-sugar biosynthesis; CDP-3,6-dideoxy-D-mannose biosynthesis; CDP-3,6-dideoxy-D-mannose from CTP and alpha-D-glucose 1-phosphate: step 2/5. Its pathway is bacterial outer membrane biogenesis; LPS O-antigen biosynthesis. The protein is CDP-glucose 4,6-dehydratase (rfbG) of Salmonella typhimurium (strain LT2 / SGSC1412 / ATCC 700720).